The following is a 330-amino-acid chain: D-cysteine desulfhydrase (330 aa).

The residue at position 52 (Lys52) is an N6-(pyridoxal phosphate)lysine.

The protein belongs to the ACC deaminase/D-cysteine desulfhydrase family. Homodimer. It depends on pyridoxal 5'-phosphate as a cofactor.

The catalysed reaction is D-cysteine + H2O = hydrogen sulfide + pyruvate + NH4(+) + H(+). In terms of biological role, catalyzes the alpha,beta-elimination reaction of D-cysteine and of several D-cysteine derivatives. It could be a defense mechanism against D-cysteine. The sequence is that of D-cysteine desulfhydrase from Yersinia pseudotuberculosis serotype O:1b (strain IP 31758).